The following is a 643-amino-acid chain: Phosphomethylpyrimidine synthase (643 aa).

Substrate-binding positions include N248, M277, Y306, H342, 362–364, 403–406, and E442; these read SRG and DGLR. Residue H446 coordinates Zn(2+). Y469 provides a ligand contact to substrate. H510 is a binding site for Zn(2+). C590, C593, and C598 together coordinate [4Fe-4S] cluster.

It belongs to the ThiC family. As to quaternary structure, homodimer. Requires [4Fe-4S] cluster as cofactor.

The enzyme catalyses 5-amino-1-(5-phospho-beta-D-ribosyl)imidazole + S-adenosyl-L-methionine = 4-amino-2-methyl-5-(phosphooxymethyl)pyrimidine + CO + 5'-deoxyadenosine + formate + L-methionine + 3 H(+). It participates in cofactor biosynthesis; thiamine diphosphate biosynthesis. Functionally, catalyzes the synthesis of the hydroxymethylpyrimidine phosphate (HMP-P) moiety of thiamine from aminoimidazole ribotide (AIR) in a radical S-adenosyl-L-methionine (SAM)-dependent reaction. The chain is Phosphomethylpyrimidine synthase from Burkholderia cenocepacia (strain HI2424).